A 517-amino-acid chain; its full sequence is UDP-N-acetylmuramyl-tripeptide synthetase (517 aa).

Ser-38 contacts UDP-N-acetyl-alpha-D-muramoyl-L-alanyl-D-glutamate. 116 to 122 (GTKGKTT) is an ATP binding site. Residues Asn-160, 162 to 163 (TT), Ser-189, and Arg-197 contribute to the UDP-N-acetyl-alpha-D-muramoyl-L-alanyl-D-glutamate site. Position 231 is an N6-carboxylysine (Lys-231).

The protein belongs to the MurCDEF family. MurE subfamily. In terms of processing, carboxylation is probably crucial for Mg(2+) binding and, consequently, for the gamma-phosphate positioning of ATP.

The protein resides in the cytoplasm. Its pathway is cell wall biogenesis; peptidoglycan biosynthesis. In terms of biological role, catalyzes the addition of an amino acid to the nucleotide precursor UDP-N-acetylmuramoyl-L-alanyl-D-glutamate (UMAG) in the biosynthesis of bacterial cell-wall peptidoglycan. This chain is UDP-N-acetylmuramyl-tripeptide synthetase, found in Lacticaseibacillus paracasei (strain ATCC 334 / BCRC 17002 / CCUG 31169 / CIP 107868 / KCTC 3260 / NRRL B-441) (Lactobacillus paracasei).